The primary structure comprises 556 residues: 2-succinyl-5-enolpyruvyl-6-hydroxy-3-cyclohexene-1-carboxylate synthase (556 aa).

The protein belongs to the TPP enzyme family. MenD subfamily. Homodimer. It depends on Mg(2+) as a cofactor. The cofactor is Mn(2+). Thiamine diphosphate is required as a cofactor.

It carries out the reaction isochorismate + 2-oxoglutarate + H(+) = 5-enolpyruvoyl-6-hydroxy-2-succinyl-cyclohex-3-ene-1-carboxylate + CO2. Its pathway is quinol/quinone metabolism; 1,4-dihydroxy-2-naphthoate biosynthesis; 1,4-dihydroxy-2-naphthoate from chorismate: step 2/7. The protein operates within quinol/quinone metabolism; menaquinone biosynthesis. Its function is as follows. Catalyzes the thiamine diphosphate-dependent decarboxylation of 2-oxoglutarate and the subsequent addition of the resulting succinic semialdehyde-thiamine pyrophosphate anion to isochorismate to yield 2-succinyl-5-enolpyruvyl-6-hydroxy-3-cyclohexene-1-carboxylate (SEPHCHC). This Mycobacterium leprae (strain Br4923) protein is 2-succinyl-5-enolpyruvyl-6-hydroxy-3-cyclohexene-1-carboxylate synthase.